The primary structure comprises 358 residues: Protein IncC (358 aa).

The tract at residues 1–101 (MGAIHEETAN…VGSRRQEETG (101 aa)) is disordered. Residues 88-99 (HRQEVGSRRQEE) are compositionally biased toward basic and acidic residues.

It belongs to the ParA family.

Functionally, this is one of the proteins encoded by the trfB operon; it is involved in plasmid maintenance and replication. This Escherichia coli protein is Protein IncC (incC).